A 461-amino-acid polypeptide reads, in one-letter code: Steroidogenic factor 1 (461 aa).

The segment at residues aspartate 10–alanine 85 is a DNA-binding region (nuclear receptor). The segment at cysteine 13–cysteine 33 adopts an NR C4-type zinc-finger fold. 3 positions are modified to N6-acetyllysine: lysine 34, lysine 38, and lysine 72. The NR C4-type zinc finger occupies cysteine 49–cysteine 73. A Glycyl lysine isopeptide (Lys-Gly) (interchain with G-Cter in SUMO) cross-link involves residue lysine 119. A disordered region spans residues lysine 119–lysine 150. Positions glycine 127 to methionine 139 are enriched in pro residues. A Glycyl lysine isopeptide (Lys-Gly) (interchain with G-Cter in SUMO) cross-link involves residue lysine 194. Serine 203 carries the phosphoserine; by CDK7 modification. Residues glycine 222–lysine 459 enclose the NR LBD domain. An important for dimerization region spans residues leucine 230 to threonine 461. Positions 341, 436, and 440 each coordinate a 1,2-diacyl-sn-glycero-3-phosphocholine.

It belongs to the nuclear hormone receptor family. NR5 subfamily. In terms of assembly, binds DNA as a monomer. Part of a complex consisting of SFPQ, NONO and NR5A1. Interacts with NR0B2, NCOA2 and PPARGC1A. Interacts with DGKQ and CDK7. Binds to and activated by HIPK3. Post-translationally, acetylation stimulates the transcriptional activity. In terms of processing, sumoylation reduces CDK7-mediated phosphorylation on Ser-203. Phosphorylated on Ser-203 by CDK7. This phosphorylation promotes transcriptional activity.

Its subcellular location is the nucleus. In terms of biological role, transcriptional activator. Seems to be essential for sexual differentiation and formation of the primary steroidogenic tissues. Binds to the Ad4 site found in the promoter region of steroidogenic P450 genes such as CYP11A, CYP11B and CYP21B. Also regulates the AMH/Muellerian inhibiting substance gene as well as the AHCH and STAR genes. 5'-YCAAGGYC-3' and 5'-RRAGGTCA-3' are the consensus sequences for the recognition by NR5A1. The SFPQ-NONO-NR5A1 complex binds to the CYP17 promoter and regulates basal and cAMP-dependent transcriptional activity. Binds phosphatidylcholine and phospholipids with a phosphatidylinositol (PI) headgroup, in particular PI(3,4)P2 and PI(3,4,5)P3. Activated by the phosphorylation of NR5A1 by HIPK3 leading to increased steroidogenic gene expression upon cAMP signaling pathway stimulation. This chain is Steroidogenic factor 1 (NR5A1), found in Sus scrofa (Pig).